A 339-amino-acid polypeptide reads, in one-letter code: ATPase GET3 (339 aa).

Residue lysine 37 to threonine 44 coordinates ATP. Aspartate 66 is a catalytic residue. ATP contacts are provided by glutamate 237 and asparagine 264. Zn(2+) is bound by residues cysteine 275 and cysteine 278.

It belongs to the arsA ATPase family. As to quaternary structure, homodimer.

The protein resides in the cytoplasm. Its subcellular location is the endoplasmic reticulum. ATPase required for the post-translational delivery of tail-anchored (TA) proteins to the endoplasmic reticulum. Recognizes and selectively binds the transmembrane domain of TA proteins in the cytosol. This complex then targets to the endoplasmic reticulum by membrane-bound receptors, where the tail-anchored protein is released for insertion. This process is regulated by ATP binding and hydrolysis. ATP binding drives the homodimer towards the closed dimer state, facilitating recognition of newly synthesized TA membrane proteins. ATP hydrolysis is required for insertion. Subsequently, the homodimer reverts towards the open dimer state, lowering its affinity for the membrane-bound receptor, and returning it to the cytosol to initiate a new round of targeting. This is ATPase GET3 from Rhodotorula glutinis (Yeast).